The sequence spans 226 residues: Small ribosomal subunit protein uS3 (226 aa).

Residues 39-107 enclose the KH type-2 domain; it reads VRNFIRKKLA…PVHINIEEIR (69 aa).

Belongs to the universal ribosomal protein uS3 family. Part of the 30S ribosomal subunit. Forms a tight complex with proteins S10 and S14.

Its function is as follows. Binds the lower part of the 30S subunit head. Binds mRNA in the 70S ribosome, positioning it for translation. This is Small ribosomal subunit protein uS3 from Alkalilimnicola ehrlichii (strain ATCC BAA-1101 / DSM 17681 / MLHE-1).